A 605-amino-acid chain; its full sequence is Leucine-rich repeat-containing protein 40 (605 aa).

Positions 1–21 (MSRFKRGGKAPDPLSGFRAPK) are disordered. LRR repeat units follow at residues 83-104 (DLTK…ISLL), 106-127 (ALVV…IREL), 129-151 (NLQK…QHLQ), 152-173 (NLKS…IGHL), 175-196 (ILEE…VGQL), 198-219 (GLVK…IGKM), 221-242 (NLRQ…VAGM), 244-265 (SLEQ…PFLT), 266-287 (KLKE…HLQN), 290-311 (SLSV…ISLL), 313-335 (GLER…GSLP), 336-357 (NLKS…ILNK), 429-450 (PITT…IVEM), 453-475 (SVYD…CMLL), 476-497 (KLTH…MEAL), 499-520 (RLQS…LYTI), 522-543 (NLET…QLKK), 546-567 (KLST…LGNC), and 569-590 (SLRA…ILAK).

This is Leucine-rich repeat-containing protein 40 (lrrc40) from Xenopus laevis (African clawed frog).